The following is a 1693-amino-acid chain: Latrophilin Cirl (1693 aa).

Residues 1–774 (MVLQGAKQRL…LFTMFDGNMR (774 aa)) lie on the Extracellular side of the membrane. The SUEL-type lectin domain maps to 30 to 119 (ACEGKKLTIE…KYLEAHYQCV (90 aa)). Asn147, Asn260, Asn306, and Asn345 each carry an N-linked (GlcNAc...) asparagine glycan. A disordered region spans residues 190–309 (PPATHATPPG…GPSVSSNGSA (120 aa)). 2 stretches are compositionally biased toward polar residues: residues 259 to 269 (SNATAPSNTRI) and 287 to 309 (KSSPNRTPGTAASGPSVSSNGSA). Residues 379–406 (SFDEDDEEMAGTSTTTPMSTSGDCLHNS) form a disordered region. Low complexity predominate over residues 390–399 (TSTTTPMSTS). N-linked (GlcNAc...) asparagine glycosylation is found at Asn405, Asn662, Asn710, and Asn737. The GAIN-B domain maps to 568 to 761 (RSVVQKVKNI…AILMDVVDEH (194 aa)). Disulfide bonds link Cys716–Cys743 and Cys731–Cys745. The segment at 716 to 761 (CVFWNYIDHAWSANGCSLESTNRTHSVCSCNHLTNFAILMDVVDEH) is GPS. The helical transmembrane segment at 775-795 (IFIYISIAICVVFIVIALLTL) threads the bilayer. Residues 796–808 (KLFNGVFVKSART) are Cytoplasmic-facing. The chain crosses the membrane as a helical span at residues 809–829 (SIYINIYICLLAIELLFLLGI). Topologically, residues 830–835 (EQTETS) are extracellular. Residues 836–856 (IFCGFITVFLHCAILSGTSWF) traverse the membrane as a helical segment. The Cytoplasmic portion of the chain corresponds to 857-882 (CYEAFHSYSTLTSDELLLEVDQTPKV). A helical transmembrane segment spans residues 883–903 (NCYYLLSYGLSLSVVAISLVI). Over 904-927 (NPSTYTQNDYCVLMEANAVFYATF) the chain is Extracellular. Residues 928-948 (VAPVLIFFMAAIGYTFLSWII) traverse the membrane as a helical segment. The Cytoplasmic portion of the chain corresponds to 949–975 (MCRKSRTGLKTKEHTRLATVRFDIRCS). The chain crosses the membrane as a helical span at residues 976–996 (FVFFLLLSAVWCSAYFYLRGA). Over 997–1003 (KMDEDVT) the chain is Extracellular. A helical transmembrane segment spans residues 1004 to 1024 (GIYGYNFICFNTLLGLYIFVF). The Cytoplasmic portion of the chain corresponds to 1025-1693 (HCIQNEKIRR…VRCYLEPLAK (669 aa)). The tract at residues 1089–1109 (PLGTNDDAHDEQQQQQHMSAT) is disordered. 3 positions are modified to phosphoserine: Ser1165, Ser1256, and Ser1263. Disordered stretches follow at residues 1237–1264 (KPNSQHGKKKRGGVGAIPASPSGSLHSR), 1279–1362 (KTKP…APPP), 1450–1529 (SRYG…LPPQ), and 1596–1678 (SMRG…SAML). Residues 1307–1323 (QQQQQLRQQRQQQQQQL) are compositionally biased toward low complexity. A phosphoserine mark is found at Ser1324 and Ser1325. A compositionally biased stretch (low complexity) spans 1337–1357 (LHLQHQQQQQQQRRAGGQQQL). Residues 1464-1475 (RNQQQQQHSLAQ) are compositionally biased toward polar residues. 2 stretches are compositionally biased toward acidic residues: residues 1485–1498 (DEDDDEDEDDEETT) and 1508–1521 (CDEEEEDEESDMED). Low complexity predominate over residues 1640–1663 (QQLQKLSPQSTTSSSSHTSHSNPH).

The protein belongs to the G-protein coupled receptor 2 family. LN-TM7 subfamily. Forms a heterodimer, consisting of a large extracellular region non-covalently linked to a seven-transmembrane moiety. In terms of processing, proteolytically cleaved into 2 subunits, an extracellular subunit and a seven-transmembrane subunit.

It localises to the cell membrane. The polypeptide is Latrophilin Cirl (Drosophila pseudoobscura pseudoobscura (Fruit fly)).